Consider the following 409-residue polypeptide: MTYPERPLLHLLTRTSLVVQIIVGLVAGLLLASFFPAAALKVGFIGKVFVSALKAVAPVLVFVLVMASIANHKQGQQTHIRPILLLYLVGTFSAAVVAVIASFAFPSSLVLASQPGEMSPPGGIAEVLQALLLSVVDNPVNALISANFIGILAWAIGLGIAFRHASDSTRNLLSELSGGVSLIVKVVIRFAPLGIFGLVASTFAESGVEALKGYAHLLVVLLGCMLFVAFVVNPLIVFLKIRRNPYPLVLTCLRESGMTAFFTRSSAANIPVNLQLCERLGLHEDTYSVSIPLGATINMAGAAITITVLTLAAVHTLGIDVDVPTAILLSVVASVCACGASGVAGGSLLLIPLACSLFGIPSEVAMQVVAVGFIIAILQDSAETALNSSTDVLFTAAACQAEERKASAA.

A run of 9 helical transmembrane segments spans residues 17-37 (LVVQIIVGLVAGLLLASFFPA), 49-69 (FVSALKAVAPVLVFVLVMASI), 83-103 (ILLLYLVGTFSAAVVAVIASF), 142-162 (ALISANFIGILAWAIGLGIAF), 180-200 (VSLIVKVVIRFAPLGIFGLVA), 218-238 (LVVLLGCMLFVAFVVNPLIVF), 299-319 (MAGAAITITVLTLAAVHTLGI), 331-351 (VVASVCACGASGVAGGSLLLI), and 357-377 (LFGIPSEVAMQVVAVGFIIAI).

This sequence belongs to the dicarboxylate/amino acid:cation symporter (DAACS) (TC 2.A.23) family.

The protein resides in the cell inner membrane. It catalyses the reaction L-serine(in) + Na(+)(in) = L-serine(out) + Na(+)(out). It carries out the reaction L-threonine(in) + Na(+)(in) = L-threonine(out) + Na(+)(out). Functionally, involved in the import of serine and threonine into the cell, with the concomitant import of sodium (symport system). The protein is Serine/threonine transporter SstT of Pseudomonas paraeruginosa (strain DSM 24068 / PA7) (Pseudomonas aeruginosa (strain PA7)).